Here is a 333-residue protein sequence, read N- to C-terminus: 4-hydroxyproline epimerase (333 aa).

Cysteine 90 functions as the Proton acceptor in the catalytic mechanism. Residues 91–92 (GH) and aspartate 249 each bind substrate. Residue cysteine 253 is the Proton donor of the active site. Residue 254–255 (GT) participates in substrate binding.

The protein belongs to the proline racemase family. Homodimer.

It carries out the reaction trans-4-hydroxy-L-proline = cis-4-hydroxy-D-proline. Functionally, allows intracellular utilization of 4-hydroxyproline, one of the major constituents of host collagen, by converting 4-hydroxy-L-proline to 4-hydroxy-D-proline, which can be further metabolized by intracellular 4-hydroxy-D-proline oxidases. Strong B-cell mitogen. Plays an important role in the regulation of intra- and extracellular amino acid pools, allowing the bacterium to profit from host precursors and enzymatic pathways. The chain is 4-hydroxyproline epimerase from Brucella canis (strain ATCC 23365 / NCTC 10854 / RM-666).